Reading from the N-terminus, the 213-residue chain is Thymidylate kinase (213 aa).

9-16 provides a ligand contact to ATP; it reads GLEGAGKS.

Belongs to the thymidylate kinase family.

The catalysed reaction is dTMP + ATP = dTDP + ADP. Its function is as follows. Phosphorylation of dTMP to form dTDP in both de novo and salvage pathways of dTTP synthesis. The polypeptide is Thymidylate kinase (Aeromonas hydrophila subsp. hydrophila (strain ATCC 7966 / DSM 30187 / BCRC 13018 / CCUG 14551 / JCM 1027 / KCTC 2358 / NCIMB 9240 / NCTC 8049)).